Here is a 556-residue protein sequence, read N- to C-terminus: 2-succinyl-5-enolpyruvyl-6-hydroxy-3-cyclohexene-1-carboxylate synthase (556 aa).

The protein belongs to the TPP enzyme family. MenD subfamily. As to quaternary structure, homodimer. The cofactor is Mg(2+). It depends on Mn(2+) as a cofactor. Requires thiamine diphosphate as cofactor.

The enzyme catalyses isochorismate + 2-oxoglutarate + H(+) = 5-enolpyruvoyl-6-hydroxy-2-succinyl-cyclohex-3-ene-1-carboxylate + CO2. Its pathway is quinol/quinone metabolism; 1,4-dihydroxy-2-naphthoate biosynthesis; 1,4-dihydroxy-2-naphthoate from chorismate: step 2/7. The protein operates within quinol/quinone metabolism; menaquinone biosynthesis. In terms of biological role, catalyzes the thiamine diphosphate-dependent decarboxylation of 2-oxoglutarate and the subsequent addition of the resulting succinic semialdehyde-thiamine pyrophosphate anion to isochorismate to yield 2-succinyl-5-enolpyruvyl-6-hydroxy-3-cyclohexene-1-carboxylate (SEPHCHC). In Escherichia coli (strain UTI89 / UPEC), this protein is 2-succinyl-5-enolpyruvyl-6-hydroxy-3-cyclohexene-1-carboxylate synthase.